The sequence spans 115 residues: uncharacterized protein (115 aa).

This is an uncharacterized protein from Treponema pallidum (strain Nichols).